A 250-amino-acid chain; its full sequence is Triosephosphate isomerase (250 aa).

9-11 (NWK) provides a ligand contact to substrate. The active-site Electrophile is His95. Glu167 functions as the Proton acceptor in the catalytic mechanism. Residues Gly173, Ser213, and 234-235 (GG) contribute to the substrate site.

Belongs to the triosephosphate isomerase family. In terms of assembly, homodimer.

The protein resides in the cytoplasm. The enzyme catalyses D-glyceraldehyde 3-phosphate = dihydroxyacetone phosphate. It functions in the pathway carbohydrate biosynthesis; gluconeogenesis. Its pathway is carbohydrate degradation; glycolysis; D-glyceraldehyde 3-phosphate from glycerone phosphate: step 1/1. In terms of biological role, involved in the gluconeogenesis. Catalyzes stereospecifically the conversion of dihydroxyacetone phosphate (DHAP) to D-glyceraldehyde-3-phosphate (G3P). This chain is Triosephosphate isomerase, found in Flavobacterium psychrophilum (strain ATCC 49511 / DSM 21280 / CIP 103535 / JIP02/86).